Here is a 587-residue protein sequence, read N- to C-terminus: APOBEC1 complementation factor (587 aa).

RRM domains are found at residues 56–134 (CEIF…ASVD), 136–218 (CRLF…WAEP), and 231–303 (KILY…LAKP). The tract at residues 360–409 (HFPATKGHLSNRAIIRAPSVRGAAGVRGLGGRGYLAYTGLGRGYQVKGDK) is required for nuclear localization. Thr491 is subject to Phosphothreonine.

Part of the apolipoprotein B mRNA editing complex with APOBEC1. Interacts with TNPO2; TNPO2 may be responsible for transport of A1CF into the nucleus. Interacts with SYNCRIP. Interacts with CELF2/CUGBP2. Interacts with RBM47.

The protein localises to the nucleus. It is found in the endoplasmic reticulum. It localises to the cytoplasm. In terms of biological role, essential component of the apolipoprotein B mRNA editing enzyme complex which is responsible for the postranscriptional editing of a CAA codon for Gln to a UAA codon for stop in APOB mRNA. Binds to APOB mRNA and is probably responsible for docking the catalytic subunit, APOBEC1, to the mRNA to allow it to deaminate its target cytosine. The complex also seems to protect the edited APOB mRNA from nonsense-mediated decay. This chain is APOBEC1 complementation factor (A1CF), found in Pongo abelii (Sumatran orangutan).